A 547-amino-acid chain; its full sequence is Chaperonin GroEL (547 aa).

ATP contacts are provided by residues 30 to 33 (TLGP), K51, 87 to 91 (DGTTT), G415, and D496. Positions 527-547 (SDKEEPMPMRGGMGGMGGMDF) are disordered. Residues 537–547 (GGMGGMGGMDF) are compositionally biased toward gly residues.

This sequence belongs to the chaperonin (HSP60) family. In terms of assembly, forms a cylinder of 14 subunits composed of two heptameric rings stacked back-to-back. Interacts with the co-chaperonin GroES.

Its subcellular location is the cytoplasm. It catalyses the reaction ATP + H2O + a folded polypeptide = ADP + phosphate + an unfolded polypeptide.. Its function is as follows. Together with its co-chaperonin GroES, plays an essential role in assisting protein folding. The GroEL-GroES system forms a nano-cage that allows encapsulation of the non-native substrate proteins and provides a physical environment optimized to promote and accelerate protein folding. The chain is Chaperonin GroEL from Rickettsia massiliae (strain Mtu5).